Reading from the N-terminus, the 841-residue chain is GRIP1-associated protein 1 (841 aa).

Ala-2 is modified (N-acetylalanine). Coiled coils occupy residues 4-161 (ALSE…YGKE) and 208-641 (EQLQ…NSKS). Disordered regions lie at residues 532–551 (AEES…KQCR) and 558–580 (LKGK…EERD). Phosphoserine is present on residues Ser-655, Ser-666, Ser-668, Ser-669, Ser-688, Ser-690, Ser-691, and Ser-692. Residues 681 to 706 (SSAVPARSLSSSPQAQPPRPAELSDE) are disordered. Over residues 682–694 (SAVPARSLSSSPQ) the composition is skewed to low complexity. Coiled-coil stretches lie at residues 701–735 (AELS…LEVS) and 785–814 (DENL…KDME).

As to quaternary structure, interacts with GRIP1, GRIP2 and AMPA receptors. Interacts (via C-terminus) with MAPK8/JNK1 and MAP3K1/MEKK1; the interaction promotes MAP3K1-mediated phosphorylation of MAPK8. Interacts (via N-terminus) with RAB4A (in GTP-bound form). Interacts (via C-terminus) with STX12. Proteolytically cleaved by caspase-3. A minor C-terminal proteolytic fragment of 30 kDa is produced. Proteolytic cleavage is required for JNK signaling activation.

The protein resides in the early endosome membrane. The protein localises to the recycling endosome membrane. Its subcellular location is the cell projection. It is found in the axon. It localises to the dendrite. The protein resides in the synapse. Functionally, regulates the endosomal recycling back to the neuronal plasma membrane, possibly by connecting early and late recycling endosomal domains and promoting segregation of recycling endosomes from early endosomal membranes. Involved in the localization of recycling endosomes to dendritic spines, thereby playing a role in the maintenance of dendritic spine morphology. Required for the activity-induced AMPA receptor recycling to dendrite membranes and for long-term potentiation and synaptic plasticity. Its function is as follows. Functions as a scaffold protein to facilitate MAP3K1/MEKK1-mediated activation of the JNK1 kinase by phosphorylation, possibly by bringing MAP3K1/MEKK1 and JNK1 in close proximity. The chain is GRIP1-associated protein 1 from Homo sapiens (Human).